The chain runs to 136 residues: 6,7-dimethyl-8-ribityllumazine synthase (136 aa).

Residues F11, 43-45 (VYD), and 67-69 (CVI) contribute to the 5-amino-6-(D-ribitylamino)uracil site. Residue 72–73 (DT) participates in (2S)-2-hydroxy-3-oxobutyl phosphate binding. The active-site Proton donor is H75. L100 serves as a coordination point for 5-amino-6-(D-ribitylamino)uracil. R115 lines the (2S)-2-hydroxy-3-oxobutyl phosphate pocket.

It belongs to the DMRL synthase family. As to quaternary structure, forms an icosahedral capsid composed of 60 subunits, arranged as a dodecamer of pentamers.

It carries out the reaction (2S)-2-hydroxy-3-oxobutyl phosphate + 5-amino-6-(D-ribitylamino)uracil = 6,7-dimethyl-8-(1-D-ribityl)lumazine + phosphate + 2 H2O + H(+). It functions in the pathway cofactor biosynthesis; riboflavin biosynthesis; riboflavin from 2-hydroxy-3-oxobutyl phosphate and 5-amino-6-(D-ribitylamino)uracil: step 1/2. In terms of biological role, catalyzes the formation of 6,7-dimethyl-8-ribityllumazine by condensation of 5-amino-6-(D-ribitylamino)uracil with 3,4-dihydroxy-2-butanone 4-phosphate. This is the penultimate step in the biosynthesis of riboflavin. The protein is 6,7-dimethyl-8-ribityllumazine synthase of Methanococcus aeolicus (strain ATCC BAA-1280 / DSM 17508 / OCM 812 / Nankai-3).